We begin with the raw amino-acid sequence, 699 residues long: Polyribonucleotide nucleotidyltransferase (699 aa).

Mg(2+) is bound by residues aspartate 485 and aspartate 491. Residues 552–611 (PRITTIKINPEKIRDVIGKGGAVIRALTEETGTTIELEDDGTVKIASSNGEATKEAIRRI) form the KH domain. One can recognise an S1 motif domain in the interval 621 to 689 (GRIYNGKVIR…RQGRVRLSIK (69 aa)).

Belongs to the polyribonucleotide nucleotidyltransferase family. As to quaternary structure, component of the RNA degradosome, which is a multiprotein complex involved in RNA processing and mRNA degradation. Mg(2+) serves as cofactor.

It localises to the cytoplasm. The enzyme catalyses RNA(n+1) + phosphate = RNA(n) + a ribonucleoside 5'-diphosphate. Involved in mRNA degradation. Catalyzes the phosphorolysis of single-stranded polyribonucleotides processively in the 3'- to 5'-direction. The sequence is that of Polyribonucleotide nucleotidyltransferase from Shewanella sp. (strain MR-7).